A 425-amino-acid chain; its full sequence is tRNA (guanine-N(7)-)-methyltransferase non-catalytic subunit wuho (425 aa).

Residues 67-102 (ATCAGKEPGGKEQQLTKQPEEGGTTASGSGVTSTSV) form a disordered region. The segment covering 88 to 102 (GGTTASGSGVTSTSV) has biased composition (low complexity). WD repeat units lie at residues 97–138 (VTST…ARLL), 142–181 (PLAR…APPR), 185–224 (GHLS…DIHS), 228–266 (GHRE…ELLQ), and 325–365 (AGSW…PATS).

This sequence belongs to the WD repeat TRM82 family. As to quaternary structure, forms a heterodimer with the catalytic subunit Mettl1. Interacts with mei-P26 and weakly interacts with bgcn; required for the function or formation of the mei-P26-bgcn-bam-sxl complex. Interacts with nanos; may be involved in mei-P26-dependent derepression of the BMP signaling pathway. Interacts with Myc; the interaction may be mediated by mei-P26 and may be involved in the regulation of ribosome biogenesis. In testis, it is present at high level in hub cells, a niche for germline stem cells of testis. Ubiquitously expressed in all testicular cells throughout spermatogenesis. Ubiquitously expressed in all germline and somatic cells of the ovary.

It is found in the nucleus. It localises to the cytoplasm. The protein operates within tRNA modification; N(7)-methylguanine-tRNA biosynthesis. Functionally, required for the Mettl1-dependent formation of N(7)-methylguanine at position 46 (m7G46) in tRNA. In the Mettl1-wuho methyltransferase complex, it is required to stabilize and induce conformational changes of the catalytic subunit. Required for binding of nanos mRNA and repression of translation by the mei-P26-bgcn-bam-sxl complex. May cooperate with mei-P26 and nanos to derepress the BMP signaling pathway. May cooperate with mei-P26 to suppress expression of a subset of microRNAs. May cooperate with mei-P26 to regulate bam expression levels in germline cells during gametogenesis. Required to promote mitosis to meiosis transition during gametogenesis. May regulate germline cell division in part by regulating ribosome biogenesis. The chain is tRNA (guanine-N(7)-)-methyltransferase non-catalytic subunit wuho from Drosophila yakuba (Fruit fly).